The primary structure comprises 196 residues: DnaA initiator-associating protein DiaA (196 aa).

The SIS domain occupies 34 to 196; that stretch reads LVQSLLNGNK…DSTLFPHQDE (163 aa).

The protein belongs to the SIS family. DiaA subfamily. As to quaternary structure, homotetramer; dimer of dimers.

Functionally, required for the timely initiation of chromosomal replication via direct interactions with the DnaA initiator protein. This is DnaA initiator-associating protein DiaA from Serratia proteamaculans (strain 568).